We begin with the raw amino-acid sequence, 511 residues long: Mannosyl-oligosaccharide alpha-1,2-mannosidase (511 aa).

Positions 1–35 (MRLPVSFPLTVLSLLGSTIAHPYGETEAVLRSEPK) are cleaved as a signal peptide. N-linked (GlcNAc...) asparagine glycosylation occurs at asparagine 182. Residues cysteine 332 and cysteine 361 are joined by a disulfide bond. Residue asparagine 366 is glycosylated (N-linked (GlcNAc...) asparagine). Aspartate 375 (proton donor) is an active-site residue. Residue asparagine 438 is glycosylated (N-linked (GlcNAc...) asparagine). Threonine 501 lines the Ca(2+) pocket.

It belongs to the glycosyl hydrolase 47 family. Homodimer. It depends on Ca(2+) as a cofactor.

The protein localises to the secreted. The enzyme catalyses N(4)-(alpha-D-Man-(1-&gt;2)-alpha-D-Man-(1-&gt;2)-alpha-D-Man-(1-&gt;3)-[alpha-D-Man-(1-&gt;2)-alpha-D-Man-(1-&gt;3)-[alpha-D-Man-(1-&gt;2)-alpha-D-Man-(1-&gt;6)]-alpha-D-Man-(1-&gt;6)]-beta-D-Man-(1-&gt;4)-beta-D-GlcNAc-(1-&gt;4)-beta-D-GlcNAc)-L-asparaginyl-[protein] (N-glucan mannose isomer 9A1,2,3B1,2,3) + 4 H2O = N(4)-(alpha-D-Man-(1-&gt;3)-[alpha-D-Man-(1-&gt;3)-[alpha-D-Man-(1-&gt;6)]-alpha-D-Man-(1-&gt;6)]-beta-D-Man-(1-&gt;4)-beta-D-GlcNAc-(1-&gt;4)-beta-D-GlcNAc)-L-asparaginyl-[protein] (N-glucan mannose isomer 5A1,2) + 4 beta-D-mannose. It catalyses the reaction N(4)-(alpha-D-Man-(1-&gt;2)-alpha-D-Man-(1-&gt;2)-alpha-D-Man-(1-&gt;3)-[alpha-D-Man-(1-&gt;3)-[alpha-D-Man-(1-&gt;2)-alpha-D-Man-(1-&gt;6)]-alpha-D-Man-(1-&gt;6)]-beta-D-Man-(1-&gt;4)-beta-D-GlcNAc-(1-&gt;4)-beta-D-GlcNAc)-L-asparaginyl-[protein] (N-glucan mannose isomer 8A1,2,3B1,3) + 3 H2O = N(4)-(alpha-D-Man-(1-&gt;3)-[alpha-D-Man-(1-&gt;3)-[alpha-D-Man-(1-&gt;6)]-alpha-D-Man-(1-&gt;6)]-beta-D-Man-(1-&gt;4)-beta-D-GlcNAc-(1-&gt;4)-beta-D-GlcNAc)-L-asparaginyl-[protein] (N-glucan mannose isomer 5A1,2) + 3 beta-D-mannose. It functions in the pathway protein modification; protein glycosylation. In terms of biological role, involved in the maturation of Asn-linked oligosaccharides. Progressively trim alpha-1,2-linked mannose residues from Man(9)GlcNAc(2) to produce Man(5)GlcNAc(2). In Penicillium citrinum, this protein is Mannosyl-oligosaccharide alpha-1,2-mannosidase (MSDC).